The sequence spans 78 residues: Beta-defensin 105A (78 aa).

The first 27 residues, 1–27 (MALIRKTFYFLFAVFFILVQLPSGCQA), serve as a signal peptide directing secretion. 3 disulfides stabilise this stretch: Cys-43–Cys-74, Cys-53–Cys-67, and Cys-57–Cys-73.

Belongs to the beta-defensin family.

It localises to the secreted. Has antimicrobial activity. The chain is Beta-defensin 105A (DEFB105A) from Gorilla gorilla gorilla (Western lowland gorilla).